Consider the following 89-residue polypeptide: MRPDIHPEYRQVLFHDLTANTYFLVGSTLKTDRTKLWEDGNTYPYVTLDVSSASHPFYTGKQKQVSKEGQVARFGQRFGQFFNKGKAQS.

Belongs to the bacterial ribosomal protein bL31 family. Type B subfamily. As to quaternary structure, part of the 50S ribosomal subunit.

This Aeromonas hydrophila subsp. hydrophila (strain ATCC 7966 / DSM 30187 / BCRC 13018 / CCUG 14551 / JCM 1027 / KCTC 2358 / NCIMB 9240 / NCTC 8049) protein is Large ribosomal subunit protein bL31B.